Here is a 458-residue protein sequence, read N- to C-terminus: MEFDTIAAISTALGEGAIAIVRVSGEDAIEKVNRIFKGKDLTAVSSHTIHYGHIVDLDTNQVIEEVMVSIMRAPKTFTREDIVEVNCHGGLVSVNKVLQLILAQGVRLAEPGEFTKRAFLNGRIDLSQAEAVMDLIRAKTDRAMNVAINQMEGRLSKLIGRLRQEILETLAHVEVNIDYPEYDDVEEMTHRILIEKATHVQNEIEKILETSKQGKILREGIATAIIGRPNVGKSSLLNSLVQEKKAIVTDIAGTTRDVIEEYVNVRGVPLRLIDTAGIRETEDIVEQIGVERSKEMMSQADLVLIVVNYSEPLTNEDEELFRAVQGKDFIVIVNKTDLPQKIEMERVTELASEKRVITTSLIEEKGVDELEKAIADLFFEGTIESADMTYVSNARHIGLLTQARKTIGDAIAAIENGVPIDMVQIDLTRTWEILGEITGDTVHESLIDQLFSQFCLGK.

(6S)-5-formyl-5,6,7,8-tetrahydrofolate is bound by residues arginine 22, glutamate 84, and arginine 123. One can recognise a TrmE-type G domain in the interval 220–379; sequence GIATAIIGRP…LEKAIADLFF (160 aa). Asparagine 230 serves as a coordination point for K(+). GTP-binding positions include 230 to 235, 249 to 255, and 274 to 277; these read NVGKSS, TDIAGTT, and DTAG. Residue serine 234 participates in Mg(2+) binding. Threonine 249, isoleucine 251, and threonine 254 together coordinate K(+). Threonine 255 contributes to the Mg(2+) binding site. Residue lysine 458 participates in (6S)-5-formyl-5,6,7,8-tetrahydrofolate binding.

The protein belongs to the TRAFAC class TrmE-Era-EngA-EngB-Septin-like GTPase superfamily. TrmE GTPase family. Homodimer. Heterotetramer of two MnmE and two MnmG subunits. It depends on K(+) as a cofactor.

It localises to the cytoplasm. Its function is as follows. Exhibits a very high intrinsic GTPase hydrolysis rate. Involved in the addition of a carboxymethylaminomethyl (cmnm) group at the wobble position (U34) of certain tRNAs, forming tRNA-cmnm(5)s(2)U34. The polypeptide is tRNA modification GTPase MnmE (Bacillus cytotoxicus (strain DSM 22905 / CIP 110041 / 391-98 / NVH 391-98)).